Consider the following 444-residue polypeptide: Glutamate--tRNA ligase (444 aa).

Residues 12-22 (PSPTGFLHVGG) carry the 'HIGH' region motif. A 'KMSKS' region motif is present at residues 213-217 (KMSKR). Lysine 216 lines the ATP pocket.

This sequence belongs to the class-I aminoacyl-tRNA synthetase family. Glutamate--tRNA ligase type 1 subfamily. Monomer.

The protein localises to the cytoplasm. It catalyses the reaction tRNA(Glu) + L-glutamate + ATP = L-glutamyl-tRNA(Glu) + AMP + diphosphate. Catalyzes the attachment of glutamate to tRNA(Glu) in a two-step reaction: glutamate is first activated by ATP to form Glu-AMP and then transferred to the acceptor end of tRNA(Glu). The chain is Glutamate--tRNA ligase from Methylacidiphilum infernorum (isolate V4) (Methylokorus infernorum (strain V4)).